We begin with the raw amino-acid sequence, 208 residues long: Uracil phosphoribosyltransferase (208 aa).

Residues R78, R103, and 130–138 (DPMLATGGS) each bind 5-phospho-alpha-D-ribose 1-diphosphate. Residues I193 and 198 to 200 (GDA) each bind uracil. D199 is a 5-phospho-alpha-D-ribose 1-diphosphate binding site.

It belongs to the UPRTase family. Requires Mg(2+) as cofactor.

The catalysed reaction is UMP + diphosphate = 5-phospho-alpha-D-ribose 1-diphosphate + uracil. It participates in pyrimidine metabolism; UMP biosynthesis via salvage pathway; UMP from uracil: step 1/1. With respect to regulation, allosterically activated by GTP. Functionally, catalyzes the conversion of uracil and 5-phospho-alpha-D-ribose 1-diphosphate (PRPP) to UMP and diphosphate. In Pasteurella multocida (strain Pm70), this protein is Uracil phosphoribosyltransferase.